Consider the following 493-residue polypeptide: Telomere-binding protein subunit alpha (493 aa).

Positions 1 to 30 (MSSAKRSTSRVSKKKAAPAKDGAPKKREQS) are disordered. Residues 7–17 (STSRVSKKKAA) show a composition bias toward basic residues.

This sequence belongs to the telombin family. Heterodimer of an alpha and a beta subunit.

The protein localises to the nucleus. It localises to the chromosome. The protein resides in the telomere. In terms of biological role, may function as protective capping of the single-stranded telomeric overhang. May also participate in telomere length regulation during DNA replication. The protein is Telomere-binding protein subunit alpha (STY56V) of Stylonychia mytilus (Ciliate).